The primary structure comprises 196 residues: Pyridoxal 5'-phosphate synthase subunit PdxT (196 aa).

An L-glutamine-binding site is contributed by 46–48 (GES). The active-site Nucleophile is C78. L-glutamine contacts are provided by residues R105 and 133-134 (IR). Active-site charge relay system residues include H169 and E171.

This sequence belongs to the glutaminase PdxT/SNO family. In terms of assembly, in the presence of PdxS, forms a dodecamer of heterodimers. Only shows activity in the heterodimer.

The catalysed reaction is aldehydo-D-ribose 5-phosphate + D-glyceraldehyde 3-phosphate + L-glutamine = pyridoxal 5'-phosphate + L-glutamate + phosphate + 3 H2O + H(+). It carries out the reaction L-glutamine + H2O = L-glutamate + NH4(+). Its pathway is cofactor biosynthesis; pyridoxal 5'-phosphate biosynthesis. Functionally, catalyzes the hydrolysis of glutamine to glutamate and ammonia as part of the biosynthesis of pyridoxal 5'-phosphate. The resulting ammonia molecule is channeled to the active site of PdxS. The sequence is that of Pyridoxal 5'-phosphate synthase subunit PdxT from Geobacillus kaustophilus (strain HTA426).